We begin with the raw amino-acid sequence, 98 residues long: ATP synthase subunit alpha, chloroplastic (98 aa).

This sequence belongs to the ATPase alpha/beta chains family. F-type ATPases have 2 components, CF(1) - the catalytic core - and CF(0) - the membrane proton channel. CF(1) has five subunits: alpha(3), beta(3), gamma(1), delta(1), epsilon(1). CF(0) has four main subunits: a, b, b' and c.

The protein localises to the plastid. Its subcellular location is the chloroplast thylakoid membrane. It catalyses the reaction ATP + H2O + 4 H(+)(in) = ADP + phosphate + 5 H(+)(out). In terms of biological role, produces ATP from ADP in the presence of a proton gradient across the membrane. The alpha chain is a regulatory subunit. The chain is ATP synthase subunit alpha, chloroplastic (atpA) from Populus euphratica (Euphrates poplar).